The chain runs to 284 residues: Bifunctional protein FolD (284 aa).

Residues Gly-163–Ser-165, Ile-188, and Ile-229 each bind NADP(+).

The protein belongs to the tetrahydrofolate dehydrogenase/cyclohydrolase family. As to quaternary structure, homodimer.

The enzyme catalyses (6R)-5,10-methylene-5,6,7,8-tetrahydrofolate + NADP(+) = (6R)-5,10-methenyltetrahydrofolate + NADPH. It catalyses the reaction (6R)-5,10-methenyltetrahydrofolate + H2O = (6R)-10-formyltetrahydrofolate + H(+). The protein operates within one-carbon metabolism; tetrahydrofolate interconversion. Its function is as follows. Catalyzes the oxidation of 5,10-methylenetetrahydrofolate to 5,10-methenyltetrahydrofolate and then the hydrolysis of 5,10-methenyltetrahydrofolate to 10-formyltetrahydrofolate. This is Bifunctional protein FolD from Nautilia profundicola (strain ATCC BAA-1463 / DSM 18972 / AmH).